A 201-amino-acid chain; its full sequence is Glutathione peroxidase 1 (201 aa).

Phosphoserine occurs at positions 7 and 32. Selenocysteine 47 is an active-site residue. Position 47 (selenocysteine 47) is a non-standard amino acid, selenocysteine. N6-acetyllysine; alternate occurs at positions 62, 86, and 112. N6-succinyllysine; alternate occurs at positions 62, 86, and 112. Lysine 119 is subject to N6-acetyllysine. Residue lysine 146 is modified to N6-acetyllysine; alternate. The residue at position 146 (lysine 146) is an N6-succinyllysine; alternate. Phosphoserine is present on serine 195.

The protein belongs to the glutathione peroxidase family. As to quaternary structure, homotetramer. Interacts with MIEN1. In terms of processing, during periods of oxidative stress, Sec-47 may react with a superoxide radical, irreversibly lose hydroselenide and be converted to dehydroalanine. Expressed in liver, kidney, lung, brain and heart.

It is found in the cytoplasm. The protein resides in the mitochondrion. It catalyses the reaction 2 glutathione + H2O2 = glutathione disulfide + 2 H2O. The catalysed reaction is a hydroperoxy polyunsaturated fatty acid + 2 glutathione = a hydroxy polyunsaturated fatty acid + glutathione disulfide + H2O. The enzyme catalyses tert-butyl hydroperoxide + 2 glutathione = tert-butanol + glutathione disulfide + H2O. It carries out the reaction cumene hydroperoxide + 2 glutathione = 2-phenylpropan-2-ol + glutathione disulfide + H2O. It catalyses the reaction (13S)-hydroperoxy-(9Z,11E)-octadecadienoate + 2 glutathione = (13S)-hydroxy-(9Z,11E)-octadecadienoate + glutathione disulfide + H2O. The catalysed reaction is (9S)-hydroperoxy-(10E,12Z)-octadecadienoate + 2 glutathione = (9S)-hydroxy-(10E,12Z)-octadecadienoate + glutathione disulfide + H2O. The enzyme catalyses (5S)-hydroperoxy-(6E,8Z,11Z,14Z)-eicosatetraenoate + 2 glutathione = (5S)-hydroxy-(6E,8Z,11Z,14Z)-eicosatetraenoate + glutathione disulfide + H2O. It carries out the reaction (12S)-hydroperoxy-(5Z,8Z,10E,14Z)-eicosatetraenoate + 2 glutathione = (12S)-hydroxy-(5Z,8Z,10E,14Z)-eicosatetraenoate + glutathione disulfide + H2O. It catalyses the reaction (12R)-hydroperoxy-(5Z,8Z,10E,14Z)-eicosatetraenoate + 2 glutathione = (12R)-hydroxy-(5Z,8Z,10E,14Z)-eicosatetraenoate + glutathione disulfide + H2O. The catalysed reaction is (15S)-hydroperoxy-(5Z,8Z,11Z,13E)-eicosatetraenoate + 2 glutathione = (15S)-hydroxy-(5Z,8Z,11Z,13E)-eicosatetraenoate + glutathione disulfide + H2O. The enzyme catalyses (5S)-hydroperoxy-(6E,8Z,11Z,14Z,17Z)-eicosapentaenoate + 2 glutathione = (5S)-hydroxy-(6E,8Z,11Z,14Z,17Z)-eicosapentaenoate + glutathione disulfide + H2O. It carries out the reaction (12S)-hydroperoxy-(5Z,8Z,10E,14Z,17Z)-eicosapentaenoate + 2 glutathione = (12S)-hydroxy-(5Z,8Z,10E,14Z,17Z)-eicosapentaenoate + glutathione disulfide + H2O. It catalyses the reaction (15S)-hydroperoxy-(5Z,8Z,11Z,13E,17Z)-eicosapentaenoate + 2 glutathione = (15S)-hydroxy-(5Z,8Z,11Z,13E,17Z)-eicosapentaenoate + glutathione disulfide + H2O. The catalysed reaction is (15S)-hydroperoxy-(11Z,13E)-eicosadienoate + 2 glutathione = (15S)-hydroxy-(11Z,13E)-eicosadienoate + glutathione disulfide + H2O. The enzyme catalyses (17S)-hydroperoxy-(4Z,7Z,10Z,13Z,15E,19Z)-docosahexaenoate + 2 glutathione = (17S)-hydroxy-(4Z,7Z,10Z,13Z,15E,19Z)-docosahexaenoate + glutathione disulfide + H2O. In terms of biological role, catalyzes the reduction of hydroperoxides in a glutathione-dependent manner thus regulating cellular redox homeostasis. Can reduce small soluble hydroperoxides such as H2O2, cumene hydroperoxide and tert-butyl hydroperoxide, as well as several fatty acid-derived hydroperoxides. In platelets catalyzes the reduction of 12-hydroperoxyeicosatetraenoic acid, the primary product of the arachidonate 12-lipoxygenase pathway. This Mus musculus (Mouse) protein is Glutathione peroxidase 1.